Consider the following 283-residue polypeptide: Diaminopimelate epimerase (283 aa).

The substrate site is built by N13 and N67. Residue C76 is the Proton donor of the active site. Residues 77 to 78 (GN), N166, N199, and 217 to 218 (ER) contribute to the substrate site. Residue C226 is the Proton acceptor of the active site. Residue 227-228 (GT) participates in substrate binding.

This sequence belongs to the diaminopimelate epimerase family. In terms of assembly, homodimer.

Its subcellular location is the cytoplasm. The enzyme catalyses (2S,6S)-2,6-diaminopimelate = meso-2,6-diaminopimelate. It participates in amino-acid biosynthesis; L-lysine biosynthesis via DAP pathway; DL-2,6-diaminopimelate from LL-2,6-diaminopimelate: step 1/1. Its function is as follows. Catalyzes the stereoinversion of LL-2,6-diaminopimelate (L,L-DAP) to meso-diaminopimelate (meso-DAP), a precursor of L-lysine and an essential component of the bacterial peptidoglycan. The polypeptide is Diaminopimelate epimerase (Desulforapulum autotrophicum (strain ATCC 43914 / DSM 3382 / VKM B-1955 / HRM2) (Desulfobacterium autotrophicum)).